Consider the following 400-residue polypeptide: Tryptophan synthase beta chain (400 aa).

Position 90 is an N6-(pyridoxal phosphate)lysine (Lys90).

It belongs to the TrpB family. In terms of assembly, tetramer of two alpha and two beta chains. It depends on pyridoxal 5'-phosphate as a cofactor.

It carries out the reaction (1S,2R)-1-C-(indol-3-yl)glycerol 3-phosphate + L-serine = D-glyceraldehyde 3-phosphate + L-tryptophan + H2O. The protein operates within amino-acid biosynthesis; L-tryptophan biosynthesis; L-tryptophan from chorismate: step 5/5. Functionally, the beta subunit is responsible for the synthesis of L-tryptophan from indole and L-serine. In Bacillus subtilis (strain 168), this protein is Tryptophan synthase beta chain (trpB).